The primary structure comprises 433 residues: ATP-dependent protease ATPase subunit HslU (433 aa).

ATP is bound by residues isoleucine 18, 60–65, aspartate 246, glutamate 311, and arginine 383; that span reads GVGKTE.

It belongs to the ClpX chaperone family. HslU subfamily. As to quaternary structure, a double ring-shaped homohexamer of HslV is capped on each side by a ring-shaped HslU homohexamer. The assembly of the HslU/HslV complex is dependent on binding of ATP.

Its subcellular location is the cytoplasm. In terms of biological role, ATPase subunit of a proteasome-like degradation complex; this subunit has chaperone activity. The binding of ATP and its subsequent hydrolysis by HslU are essential for unfolding of protein substrates subsequently hydrolyzed by HslV. HslU recognizes the N-terminal part of its protein substrates and unfolds these before they are guided to HslV for hydrolysis. This Cereibacter sphaeroides (strain KD131 / KCTC 12085) (Rhodobacter sphaeroides) protein is ATP-dependent protease ATPase subunit HslU.